The following is a 977-amino-acid chain: Receptor-like protein kinase 7 (977 aa).

An N-terminal signal peptide occupies residues 1–28 (MAPSLRNFNFFHRFSTFLVFSLFSVVSS). The Extracellular segment spans residues 29–608 (DDLQVLLKLK…NPSRSHGDTR (580 aa)). LRR repeat units follow at residues 71-95 (RGNVTEIDLSRRGLSGNFPFDSVCE), 96-119 (IQSLEKLSLGFNSLSGIIPSDLKN), and 121-145 (TSLKYLDLGNNLFSGAFPEFSSLNQ). N-linked (GlcNAc...) asparagine glycans are attached at residues asparagine 73 and asparagine 119. 2 N-linked (GlcNAc...) asparagine glycosylation sites follow: asparagine 152 and asparagine 167. LRR repeat units lie at residues 168 to 194 (ATSLVVLSLGDNPFDATADFPVEVVSL), 195 to 218 (KKLSWLYLSNCSIAGKIPPAIGDL), 219 to 242 (TELRNLEISDSGLTGEIPSEISKL), 244 to 265 (NLWQLELYNNSLTGKLPTGFGN), 267 to 289 (KNLTYLDASTNLLQGDLSELRSL), 290 to 312 (TNLVSLQMFENEFSGEIPLEFGE), 313 to 337 (FKDLVNLSLYTNKLTGSLPQGLGSL), 339 to 361 (DFDFIDASENLLTGPIPPDMCKN), 362 to 385 (GKMKALLLLQNNLTGSIPESYANC), 386 to 409 (LTLQRFRVSENNLNGTVPAGLWGL), 411 to 433 (KLEIIDIEMNNFEGPITADIKNG), 434 to 457 (KMLGALYLGFNKLSDELPEEIGDT), 458 to 481 (ESLTKVELNNNRFTGKIPSSIGKL), 482 to 505 (KGLSSLKMQSNGFSGEIPDSIGSC), 507 to 529 (MLSDVNMAQNSISGEIPHTLGSL), 530 to 553 (PTLNALNLSDNKLSGRIPESLSSL), and 555 to 578 (LSLLDLSNNRLSGRIPLSLSSYNG). Asparagine 204 is a glycosylation site (N-linked (GlcNAc...) asparagine). Residues asparagine 252 and asparagine 268 are each glycosylated (N-linked (GlcNAc...) asparagine). N-linked (GlcNAc...) asparagine glycosylation is present at asparagine 318. Residues asparagine 373 and asparagine 399 are each glycosylated (N-linked (GlcNAc...) asparagine). Asparagine 536 and asparagine 577 each carry an N-linked (GlcNAc...) asparagine glycan. Residues 609-629 (VFVLCIVFGLLILLASLVFFL) traverse the membrane as a helical segment. The Cytoplasmic segment spans residues 630–977 (YLKKTEKKEG…ESDVKVKEIS (348 aa)). The region spanning 666–959 (IKEENLIGRG…QMIEDAEPCR (294 aa)) is the Protein kinase domain. Residues 672–680 (IGRGGCGDV) and lysine 694 each bind ATP. Residue aspartate 805 is the Proton acceptor of the active site.

Belongs to the protein kinase superfamily. Ser/Thr protein kinase family. As to quaternary structure, interacts with PIP1. As to expression, expressed in roots, stems and dry seeds. Expressed at junctions between organs, such as the insertion zones of stamens, petals and sepals, the transition zones of floral stem and pedicel, pedicel and silique, and floral stem and cauline leaves.

It is found in the membrane. It carries out the reaction L-seryl-[protein] + ATP = O-phospho-L-seryl-[protein] + ADP + H(+). The catalysed reaction is L-threonyl-[protein] + ATP = O-phospho-L-threonyl-[protein] + ADP + H(+). Functionally, plays a role in pattern-triggered immunity (PTI) signaling induced by pathogen-associated molecular patterns (PAMPs). Acts as a receptor for PIP1 defense peptide. PIP1 is an endogenous secreted peptide that acts as elicitor of immune response and positive regulator of defense response. Involved in the control of seed germination speed, in tolerance to oxidative stress and in maintaining seed longevity. The protein is Receptor-like protein kinase 7 of Arabidopsis thaliana (Mouse-ear cress).